The following is a 184-amino-acid chain: Photosystem I assembly protein Ycf4 (184 aa).

Helical transmembrane passes span Phe22–Ser42 and Ile57–Ser77.

It belongs to the Ycf4 family.

The protein localises to the plastid. It localises to the chloroplast thylakoid membrane. Functionally, seems to be required for the assembly of the photosystem I complex. This Aethionema grandiflorum (Persian stone-cress) protein is Photosystem I assembly protein Ycf4.